Consider the following 604-residue polypeptide: MTKEAGELNALKNRFRTDYCGQLGLDGEGREVRLGGWVHRIRDHGGLVFIDLRDHTGICQLVVQPEREELFELAGRLHAESVITIEGRVVARSSETINPRLASGSIEVVVSAIGVESHARPLPFPVADEVQTSEELRLKYRFIDLRREKIHENIIFRSRISAAIRRYLEERDFIEIQTPILTSSSPEGARDFLVPSRLHPGKFYALPQAPQQFKQLLMVAGFPRYFQIAPCFRDEDARADRSPGEFYQLDMEMAFIEQDDLFEILEGMFRHLTDTMSKKRITRFPFPRISYREVMDSYGTDKPDLRIPLKIEDVTPMFTDSGFKVFASNTKPGCAVKALVLKGRGTESRLFYDKAEKRARELGSAGLAYIQFREEGPKGPIVKFMTEPELQAMKDQLTLETGDVVFFAAGKWEAACKIMGGMRTYFGDLFTLDPDELSFCWIVDFPMFEYNEDAKKVDFSHNPFSMPQGEMEALETMDPLDVLAYQYDIVCNGIELSSGAIRNHKPEIMYKAFEIAGYSREEVDLRFGHMIEAFKLGAPPHGGIAPGLDRLVMILRDEQNIREVIAFPMNQQAQDLMMAAPSEVTGAQLRELHIRLDLPEEEKK.

E187 contacts L-aspartate. The interval 211 to 214 is aspartate; it reads QQFK. 2 residues coordinate L-aspartate: R233 and H461. Residue 233 to 235 participates in ATP binding; sequence RDE. An ATP-binding site is contributed by E495. R502 serves as a coordination point for L-aspartate. Position 547 to 550 (547 to 550) interacts with ATP; the sequence is GLDR.

It belongs to the class-II aminoacyl-tRNA synthetase family. Type 1 subfamily. As to quaternary structure, homodimer.

It is found in the cytoplasm. It catalyses the reaction tRNA(Asx) + L-aspartate + ATP = L-aspartyl-tRNA(Asx) + AMP + diphosphate. Its function is as follows. Aspartyl-tRNA synthetase with relaxed tRNA specificity since it is able to aspartylate not only its cognate tRNA(Asp) but also tRNA(Asn). Reaction proceeds in two steps: L-aspartate is first activated by ATP to form Asp-AMP and then transferred to the acceptor end of tRNA(Asp/Asn). The chain is Aspartate--tRNA(Asp/Asn) ligase from Chlorobium luteolum (strain DSM 273 / BCRC 81028 / 2530) (Pelodictyon luteolum).